A 302-amino-acid chain; its full sequence is Ethylmalonyl-CoA decarboxylase (302 aa).

Belongs to the enoyl-CoA hydratase/isomerase family.

Its subcellular location is the cytoplasm. It localises to the cytosol. The catalysed reaction is (2S)-ethylmalonyl-CoA + H(+) = butanoyl-CoA + CO2. The enzyme catalyses (S)-methylmalonyl-CoA + H(+) = propanoyl-CoA + CO2. It catalyses the reaction (2R)-ethylmalonyl-CoA + H(+) = butanoyl-CoA + CO2. Its function is as follows. Decarboxylates ethylmalonyl-CoA, a potentially toxic metabolite, to form butyryl-CoA, suggesting it might be involved in metabolite proofreading. Acts preferentially on (S)-ethylmalonyl-CoA but also has some activity on the (R)-isomer. Also has methylmalonyl-CoA decarboxylase activity at lower level. The polypeptide is Ethylmalonyl-CoA decarboxylase (echdc1) (Danio rerio (Zebrafish)).